A 227-amino-acid polypeptide reads, in one-letter code: UPF0688 protein C1orf174 homolog (227 aa).

2 disordered regions span residues 1 to 122 and 207 to 227; these read MRKR…VSDL and AKEEDEDDDDYVDGLANEGNI. The segment covering 47 to 63 has biased composition (basic and acidic residues); sequence TEKESSKKLRKDEKGPV. Composition is skewed to polar residues over residues 77–104 and 113–122; these read AASNESSNVNDSQQSEKSITNTKDNGTR and RLPSSPVSDL.

It belongs to the UPF0688 family.

The protein resides in the nucleus. This chain is UPF0688 protein C1orf174 homolog, found in Xenopus tropicalis (Western clawed frog).